The sequence spans 355 residues: UDP-N-acetylglucosamine--N-acetylmuramyl-(pentapeptide) pyrophosphoryl-undecaprenol N-acetylglucosamine transferase (355 aa).

UDP-N-acetyl-alpha-D-glucosamine contacts are provided by residues 11-13, Asn-120, Arg-161, Ser-188, and Gln-280; that span reads TGG.

It belongs to the glycosyltransferase 28 family. MurG subfamily.

It localises to the cell inner membrane. It carries out the reaction di-trans,octa-cis-undecaprenyl diphospho-N-acetyl-alpha-D-muramoyl-L-alanyl-D-glutamyl-meso-2,6-diaminopimeloyl-D-alanyl-D-alanine + UDP-N-acetyl-alpha-D-glucosamine = di-trans,octa-cis-undecaprenyl diphospho-[N-acetyl-alpha-D-glucosaminyl-(1-&gt;4)]-N-acetyl-alpha-D-muramoyl-L-alanyl-D-glutamyl-meso-2,6-diaminopimeloyl-D-alanyl-D-alanine + UDP + H(+). It functions in the pathway cell wall biogenesis; peptidoglycan biosynthesis. Its function is as follows. Cell wall formation. Catalyzes the transfer of a GlcNAc subunit on undecaprenyl-pyrophosphoryl-MurNAc-pentapeptide (lipid intermediate I) to form undecaprenyl-pyrophosphoryl-MurNAc-(pentapeptide)GlcNAc (lipid intermediate II). This is UDP-N-acetylglucosamine--N-acetylmuramyl-(pentapeptide) pyrophosphoryl-undecaprenol N-acetylglucosamine transferase from Prochlorococcus marinus (strain MIT 9211).